The sequence spans 448 residues: MREPIVAIATPYGESAIGIVRLSGKGVLDLVKKFFKTKREIKPRYAHFGVLYDDKGEELDEGVLIYYKAPHSYTGEDMVELNLHGNPRILKRALELFVNAGARLAEPGEFTKRAFLNGKLDLTQAEAVAELISAKTELARKVALKQLHGELSKHIRPLRETLLELLAYVEADIEFAEEDIPTLTKEQVIQMVDKVIEGINELLKTAKTGKFIREGVKLAIVGRPNVGKSSLFNALLKEERAIVTDIAGTTRDFIEETLQIKGVPVRLVDTAGIRETKDLVERIGVERSKQKVKEADLILFVIDASQEITEEDLRIYEEIKEKDHIVVANKVDLGIRANLEKFKGEKIVKVSALKGTGLEELSEEILKKVGANLEESVNIYISVRHETLLKKAKEVLERFKEEFREKDISPEIAMLDLREASDYLGEILGEITTEDLLGKIFSTFCIGK.

(6S)-5-formyl-5,6,7,8-tetrahydrofolate is bound by residues Arg21, Glu80, and Lys119. Positions 215 to 370 (GVKLAIVGRP…LSEEILKKVG (156 aa)) constitute a TrmE-type G domain. Asn225 serves as a coordination point for K(+). Residues 225–230 (NVGKSS), 244–250 (TDIAGTT), and 269–272 (DTAG) each bind GTP. Ser229 is a Mg(2+) binding site. Positions 244, 246, and 249 each coordinate K(+). Residue Thr250 coordinates Mg(2+). Residue Lys448 participates in (6S)-5-formyl-5,6,7,8-tetrahydrofolate binding.

The protein belongs to the TRAFAC class TrmE-Era-EngA-EngB-Septin-like GTPase superfamily. TrmE GTPase family. As to quaternary structure, homodimer. Heterotetramer of two MnmE and two MnmG subunits. It depends on K(+) as a cofactor.

It localises to the cytoplasm. Its function is as follows. Exhibits a very high intrinsic GTPase hydrolysis rate. Involved in the addition of a carboxymethylaminomethyl (cmnm) group at the wobble position (U34) of certain tRNAs, forming tRNA-cmnm(5)s(2)U34. This Aquifex aeolicus (strain VF5) protein is tRNA modification GTPase MnmE.